Here is a 304-residue protein sequence, read N- to C-terminus: Protease HtpX homolog 1 (304 aa).

2 consecutive transmembrane segments (helical) span residues 17-37 (VTLFLLGLLYVGFVAALIALL) and 39-59 (SWVLVVVIVALVFGAQYWFSD). Zn(2+) is bound at residue His-140. Glu-141 is an active-site residue. Position 144 (His-144) interacts with Zn(2+). 2 helical membrane-spanning segments follow: residues 151-171 (AVITVASFLGVIAGLIVRFAF) and 186-206 (AVLAVVMGVSAAVYALSFLLI). Glu-214 provides a ligand contact to Zn(2+).

This sequence belongs to the peptidase M48B family. It depends on Zn(2+) as a cofactor.

It is found in the cell membrane. The sequence is that of Protease HtpX homolog 1 from Streptomyces coelicolor (strain ATCC BAA-471 / A3(2) / M145).